The sequence spans 893 residues: Dystroglycan 1 (893 aa).

Positions 1–27 (MSVDNWLLHPLWGQTFLLLLSVAVAQA) are cleaved as a signal peptide. Residues 28 to 406 (HWPSEPSEAV…GQIRPTLTIP (379 aa)) are required for laminin recognition. The interval 47-69 (SMHSVLSDFQEAVPTVVGIPDGT) is O-glycosylated at one site. N-linked (GlcNAc...) asparagine glycosylation occurs at asparagine 139. Cysteine 180 and cysteine 262 are joined by a disulfide. The interval 314–483 (ATPTPVTAIG…PPTRIRTTTS (170 aa)) is mucin-like domain. O-linked (Man6P...) threonine glycans are attached at residues threonine 315, threonine 317, and threonine 377. The tract at residues 379 to 498 (TLGPIQPTRV…GEPNQRPELK (120 aa)) is disordered. A compositionally biased stretch (low complexity) spans 409-445 (VEPTAVITPPTTTTKKPRVSTPKPATPSTDSSTTTTR). Residues 461 to 483 (TTKAPITRLETASPPTRIRTTTS) form an O-glycosylated at seven sites with GalNAc region. The region spanning 601-710 (KAPARFKARL…LSIAVTGSGS (110 aa)) is the Peptidase S72 domain. N-linked (GlcNAc...) asparagine glycans are attached at residues asparagine 639, asparagine 647, and asparagine 659. Residues 652–751 (SIVVEWTNNT…SSEDDVYLHT (100 aa)) are Extracellular-facing. A disulfide bond links cysteine 667 and cysteine 711. Residues 722–744 (PSPGSSAAPATEVPDRDPEKSSE) are disordered. The span at 734-744 (VPDRDPEKSSE) shows a compositional bias: basic and acidic residues. The helical transmembrane segment at 752–772 (VIPAVVVAAILLIAGIIAMIC) threads the bilayer. The Cytoplasmic portion of the chain corresponds to 773–893 (YRKKRKGKLT…YRSPPPYVPP (121 aa)). A Nuclear localization signal motif is present at residues 774–780 (RKKRKGK). The residue at position 788 (threonine 788) is a Phosphothreonine. Positions 817–893 (LQEEKAPLPP…YRSPPPYVPP (77 aa)) are required for interaction with CAV3. The interval 821 to 893 (KAPLPPPEYP…YRSPPPYVPP (73 aa)) is disordered. The span at 830 to 844 (PNQSMPETTPLNQDT) shows a compositional bias: polar residues. Over residues 857-868 (NAPPYQPPPPFT) the composition is skewed to pro residues. The segment at 878–893 (PKNMTPYRSPPPYVPP) is required for binding DMD and UTRN. The short motif at 887–890 (PPPY) is the PPXY motif element. Residue tyrosine 890 is modified to Phosphotyrosine; by SRC.

As to quaternary structure, monomer. Heterodimer of alpha- and beta-dystroglycan subunits which are the central components of the dystrophin-glycoprotein complex. This complex then can form a dystrophin-associated glycoprotein complex (DGC) which is composed of three subcomplexes: a cytoplasmic complex comprised of DMD (or UTRN), DTNA and a number of syntrophins, such as SNTB1, SNTB2, SNTG1 and SNTG2, the transmembrane dystroglycan complex, and the sarcoglycan-sarcospan complex. Interacts (via the N-terminal of alphaDAG1) with LARGE1; the interaction enhances laminin binding. Interacts with SGCD. Interacts with AGR2 and AGR3. Interacts (betaDAG1) with DMD; the interaction is inhibited by phosphorylation on the PPXY motif. Interacts (betaDAG1, via its PPXY motif) with UTRN (via its WWW and ZZ domains); the interaction is inhibited by phosphorylation on the PPXY motif. Interacts (betaDAG1, via its phosphorylated PPXY motif) with the SH2 domain-containing proteins, FYN, CSK, NCK and SHC. Interacts (betaDAG1) with CAV3 (via a central WW-like domain); the interaction disrupts the binding of DMD. BetaDAG1 directly interacts with ANK3, but not with ANK2; this interaction does not interfere with DMD-binding and is required for retention at costameres. Identified in a dystroglycan complex that contains at least PRX, DRP2, UTRN, DMD and DAG1. Interacts with POMGNT1. BetaDAG1 interacts with CD93. In terms of processing, O-glycosylated. POMGNT1 catalyzes the initial addition of N-acetylglucosamine, giving rise to the GlcNAc(beta1-2)Man(alpha1-)O-Ser/Thr moiety and thus providing the necessary basis for the addition of further carbohydrate moieties. Heavily O-glycosylated comprising of up to two thirds of its mass and the carbohydrate composition differs depending on tissue type. Mucin-type O-glycosylation is important for ligand binding activity. O-mannosylation is found in high abundance in both brain and muscle where the most abundant glycan is Sia-alpha-2-3-Gal-beta-1-4-Glc-NAc-beta-1-2-Man. In muscle, glycosylation on Thr-315, Thr-317, Thr-379 by a phosphorylated O-mannosyl glycan with the structure 2-(N-acetylamido)-2-deoxygalactosyl-beta-1,3-2-(N-acetylamido)-2-deoxyglucosyl-beta-1,4-6-phosphomannose is mediated by like-acetylglucosaminyltransferase (LARGE1) protein amd is required for laminin binding. O-glycosylated in the N-terminal region with a core 1 or possibly core 8 glycan. The brain form displays a unique glycosylation pattern which is absent in other tissues; this form shows enhanced binding to laminin LAMA5 compared to the skeletal muscle form. Post-translationally, N-glycosylated. Autolytic cleavage produces the alpha and beta subunits. In cutaneous cells, as well as in certain pathological conditions, shedding of beta-dystroglycan can occur releasing a peptide of about 30 kDa. In terms of processing, SRC-mediated phosphorylation of the PPXY motif of the beta subunit recruits SH2 domain-containing proteins, but inhibits binding to WWW domain-containing proteins, DMD and UTRN. This phosphorylation also inhibits nuclear entry. In terms of tissue distribution, detected in brain and kidney (at protein level). Detected in sciatic nerve (at protein level). Expressed in neurons and muscle cells (at protein level). Expressed in a variety of tissues. In brain, expressed in the hippocampal formation, the olfactory bulb, the cerebellum and the thalamus. In the peripheral nerve system, expressed in Schwann cells.

It localises to the secreted. The protein resides in the extracellular space. Its subcellular location is the cell membrane. It is found in the cytoplasm. The protein localises to the cytoskeleton. It localises to the nucleus. The protein resides in the nucleoplasm. Its subcellular location is the sarcolemma. It is found in the postsynaptic cell membrane. Its function is as follows. The dystroglycan complex is involved in a number of processes including laminin and basement membrane assembly, sarcolemmal stability, cell survival, peripheral nerve myelination, nodal structure, cell migration, and epithelial polarization. Functionally, extracellular peripheral glycoprotein that acts as a receptor for extracellular matrix proteins containing laminin-G domains, and for certain adenoviruses. Receptor for laminin-2 (LAMA2) and agrin in peripheral nerve Schwann cells. Also acts as a receptor for laminin LAMA5. Transmembrane protein that plays important roles in connecting the extracellular matrix to the cytoskeleton. Acts as a cell adhesion receptor in both muscle and non-muscle tissues. Receptor for both DMD and UTRN and, through these interactions, scaffolds axin to the cytoskeleton. Also functions in cell adhesion-mediated signaling and implicated in cell polarity. The polypeptide is Dystroglycan 1 (Mus musculus (Mouse)).